Reading from the N-terminus, the 399-residue chain is Forkhead box protein A4-A (399 aa).

The segment at residues 119 to 213 (KPPYSYISLI…ENGCYLRRQK (95 aa)) is a DNA-binding region (fork-head). Over residues 219–234 (RSKSGEGEKKVNKPGE) the composition is skewed to basic and acidic residues. The tract at residues 219–290 (RSKSGEGEKK…VGLSPTSEQA (72 aa)) is disordered. A compositionally biased stretch (polar residues) spans 267-277 (STGSSIHQACG).

As to expression, during stages 8.5 to 10, expressed in the part of the dorsal mesoderm invaginating the dorsal blastopore lip (Spemann organizer), as a direct response to dorsal mesodermal induction. At stage 12 (mid-gastrulation), restricted to the dorsal midline in the deeper layers of mesodermal cells. Continuously present in the posterior portion of invaginated mesoderm and expressed within the notochord. Also present in the midline of the neural plate during gastrulation, but absent from the notoplate in exogastrula embryos. Expression in the notochord continues in neurula-stage embryos and at stage 20 in addition to the notochord, expression is seen in the pharyngeal endoderm.

The protein localises to the nucleus. Transcriptional repressor involved in embryonic nervous system development. Plays a role in the induction and patterning of the anterior-posterior neural axis. Involved in the establishment of floor plate differentiation from neural plate cells during gastrulation. Binds the anf1 promoter sequence to restrict expression of anf1 to the anterior of the neural plate, thereby patterning the forebrain. Can bind to the HNF-3-alpha DNA target sequence. Cooperates with t/bra in a dose-dependent manner to specify dorsal mesoderm formation, including notochord. Binds to DNA via the target sequence 5'-[GA]TAAA[TC]A-3', with 5'-GTAAATA-3' being the preferred binding site. This is Forkhead box protein A4-A (foxa4-a) from Xenopus laevis (African clawed frog).